A 407-amino-acid polypeptide reads, in one-letter code: S-adenosylmethionine synthase (407 aa).

An ATP-binding site is contributed by H19. D21 provides a ligand contact to Mg(2+). E47 is a binding site for K(+). E60 and Q103 together coordinate L-methionine. The flexible loop stretch occupies residues 103–113; the sequence is QSQEIADGVDN. The segment at 107–134 is disordered; sequence IADGVDNSDEARTNGDVEEDDRAGAGDQ. Residues 178 to 180, D258, 264 to 265, A281, and K285 contribute to the ATP site; these read DGK and RK. An L-methionine-binding site is contributed by D258. Position 289 (K289) interacts with L-methionine.

The protein belongs to the AdoMet synthase family. Homotetramer; dimer of dimers. The cofactor is Mg(2+). K(+) is required as a cofactor.

It is found in the cytoplasm. It carries out the reaction L-methionine + ATP + H2O = S-adenosyl-L-methionine + phosphate + diphosphate. It participates in amino-acid biosynthesis; S-adenosyl-L-methionine biosynthesis; S-adenosyl-L-methionine from L-methionine: step 1/1. In terms of biological role, catalyzes the formation of S-adenosylmethionine (AdoMet) from methionine and ATP. The overall synthetic reaction is composed of two sequential steps, AdoMet formation and the subsequent tripolyphosphate hydrolysis which occurs prior to release of AdoMet from the enzyme. The chain is S-adenosylmethionine synthase from Corynebacterium glutamicum (strain ATCC 13032 / DSM 20300 / JCM 1318 / BCRC 11384 / CCUG 27702 / LMG 3730 / NBRC 12168 / NCIMB 10025 / NRRL B-2784 / 534).